Reading from the N-terminus, the 414-residue chain is Membrane protein UL43 (414 aa).

6 helical membrane-spanning segments follow: residues Gly-39–Ser-59, Gly-61–Leu-81, Ala-96–Gly-116, Val-121–Leu-141, Leu-148–Leu-168, and Ala-184–Phe-204. The disordered stretch occupies residues Pro-225–Val-253. Residues Ala-228–Asp-237 are compositionally biased toward basic and acidic residues. Transmembrane regions (helical) follow at residues Gly-339–Ile-359 and Ala-383–Val-403.

Belongs to the alphaherpesvirinae HHV-1 UL43 family.

It is found in the membrane. The chain is Membrane protein UL43 from Homo sapiens (Human).